The following is a 115-amino-acid chain: Peptidyl-tRNA hydrolase (115 aa).

This sequence belongs to the PTH2 family.

It localises to the cytoplasm. It catalyses the reaction an N-acyl-L-alpha-aminoacyl-tRNA + H2O = an N-acyl-L-amino acid + a tRNA + H(+). Functionally, the natural substrate for this enzyme may be peptidyl-tRNAs which drop off the ribosome during protein synthesis. The chain is Peptidyl-tRNA hydrolase (pth) from Nanoarchaeum equitans (strain Kin4-M).